The primary structure comprises 256 residues: Imidazole glycerol phosphate synthase subunit HisF (256 aa).

Catalysis depends on residues Asp11 and Asp130.

This sequence belongs to the HisA/HisF family. As to quaternary structure, heterodimer of HisH and HisF.

It localises to the cytoplasm. The enzyme catalyses 5-[(5-phospho-1-deoxy-D-ribulos-1-ylimino)methylamino]-1-(5-phospho-beta-D-ribosyl)imidazole-4-carboxamide + L-glutamine = D-erythro-1-(imidazol-4-yl)glycerol 3-phosphate + 5-amino-1-(5-phospho-beta-D-ribosyl)imidazole-4-carboxamide + L-glutamate + H(+). Its pathway is amino-acid biosynthesis; L-histidine biosynthesis; L-histidine from 5-phospho-alpha-D-ribose 1-diphosphate: step 5/9. IGPS catalyzes the conversion of PRFAR and glutamine to IGP, AICAR and glutamate. The HisF subunit catalyzes the cyclization activity that produces IGP and AICAR from PRFAR using the ammonia provided by the HisH subunit. This is Imidazole glycerol phosphate synthase subunit HisF from Cupriavidus pinatubonensis (strain JMP 134 / LMG 1197) (Cupriavidus necator (strain JMP 134)).